The primary structure comprises 65 residues: Large ribosomal subunit protein bL31 (65 aa).

Zn(2+) is bound by residues Cys-16, Cys-18, Cys-36, and Cys-39.

This sequence belongs to the bacterial ribosomal protein bL31 family. Type A subfamily. As to quaternary structure, part of the 50S ribosomal subunit. Zn(2+) is required as a cofactor.

Its function is as follows. Binds the 23S rRNA. The protein is Large ribosomal subunit protein bL31 of Geotalea daltonii (strain DSM 22248 / JCM 15807 / FRC-32) (Geobacter daltonii).